A 387-amino-acid polypeptide reads, in one-letter code: 26S proteasome regulatory subunit 6B homolog (387 aa).

Gly-175–Thr-182 contributes to the ATP binding site.

The protein belongs to the AAA ATPase family. As to quaternary structure, the 26S proteasome consists of a 20S proteasome core and two 19S regulatory subunits. The 20S proteasome core is composed of 28 subunits that are arranged in four stacked rings, resulting in a barrel-shaped structure. The two end rings are each formed by seven alpha subunits, and the two central rings are each formed by seven beta subunits. The catalytic chamber with the active sites is on the inside of the barrel.

The protein localises to the cytoplasm. The protein resides in the nucleus. In terms of biological role, acts as a regulatory subunit of the 26S proteasome which degrades poly-ubiquitinated proteins in the cytoplasm and in the nucleus. It is essential for the regulated turnover of proteins and for the removal of misfolded proteins. The proteasome is a multicatalytic proteinase complex that is characterized by its ability to cleave peptides with Arg, Phe, Tyr, Leu, and Glu adjacent to the leaving group at neutral or slightly basic pH. The sequence is that of 26S proteasome regulatory subunit 6B homolog from Encephalitozoon cuniculi (strain GB-M1) (Microsporidian parasite).